The primary structure comprises 147 residues: MKIVIQRVSEASVAIEGEIVGAIQKGLLLLVGFGPEDGQEDVDYAVRKITQMRIFSDAEDKMNLSLLDIKGSILSISQFTLFANTKKGNRPAFTEAAKPEMASQLYEQFNQALSAFCPLERGVFGADMKVSLVNDGPVTIILDTKNR.

A Gly-cisPro motif, important for rejection of L-amino acids motif is present at residues 136–137 (GP).

It belongs to the DTD family. Homodimer.

It is found in the cytoplasm. The catalysed reaction is glycyl-tRNA(Ala) + H2O = tRNA(Ala) + glycine + H(+). It catalyses the reaction a D-aminoacyl-tRNA + H2O = a tRNA + a D-alpha-amino acid + H(+). Its function is as follows. An aminoacyl-tRNA editing enzyme that deacylates mischarged D-aminoacyl-tRNAs. Also deacylates mischarged glycyl-tRNA(Ala), protecting cells against glycine mischarging by AlaRS. Acts via tRNA-based rather than protein-based catalysis; rejects L-amino acids rather than detecting D-amino acids in the active site. By recycling D-aminoacyl-tRNA to D-amino acids and free tRNA molecules, this enzyme counteracts the toxicity associated with the formation of D-aminoacyl-tRNA entities in vivo and helps enforce protein L-homochirality. The protein is D-aminoacyl-tRNA deacylase of Streptococcus uberis (strain ATCC BAA-854 / 0140J).